The primary structure comprises 114 residues: Macrophage migration inhibitory factor homolog (114 aa).

The active-site Proton acceptor; via imino nitrogen is Pro2. Substrate-binding residues include Lys33 and Asn98.

It belongs to the MIF family.

The protein resides in the secreted. The catalysed reaction is L-dopachrome = 5,6-dihydroxyindole-2-carboxylate. The enzyme catalyses 3-phenylpyruvate = enol-phenylpyruvate. Tautomerization of the methyl ester of L-dopachrome. Inhibits migration of human peripheral blood mononuclear cells. This is Macrophage migration inhibitory factor homolog from Trichuris trichiura (Whipworm).